An 825-amino-acid chain; its full sequence is NT-3 growth factor receptor (825 aa).

The N-terminal stretch at 1 to 31 (MDVSLCPAKCSFWRIFLLGSVWLDYVGSVLA) is a signal peptide. 2 cysteine pairs are disulfide-bonded: cysteine 32-cysteine 38 and cysteine 36-cysteine 45. The Extracellular segment spans residues 32 to 429 (CPANCVCSKT…TVTHKPEEDT (398 aa)). N-linked (GlcNAc...) asparagine glycosylation is found at asparagine 68, asparagine 72, and asparagine 79. LRR repeat units lie at residues 104–125 (GLQK…AFAK) and 128–149 (HLRY…LFQT). Asparagine 133 and asparagine 163 each carry an N-linked (GlcNAc...) asparagine glycan. One can recognise an LRRCT domain in the interval 160–209 (NFFNCSCDIRWMQLWQEQGEARLDSQSLYCISADGSQLPLFRMNISQCDL). 2 cysteine pairs are disulfide-bonded: cysteine 164–cysteine 189 and cysteine 166–cysteine 207. Residues asparagine 203, asparagine 218, asparagine 232, asparagine 259, asparagine 267, asparagine 272, and asparagine 294 are each glycosylated (N-linked (GlcNAc...) asparagine). 2 consecutive Ig-like C2-type domains span residues 210–300 (PEIS…VALT) and 309–382 (SLVE…IAKN). A disulfide bridge links cysteine 231 with cysteine 284. Cysteine 320 and cysteine 362 form a disulfide bridge. 2 N-linked (GlcNAc...) asparagine glycosylation sites follow: asparagine 375 and asparagine 388. The chain crosses the membrane as a helical span at residues 430–453 (FGVSIAVGLAAFACVLLVVLFIMI). Topologically, residues 454 to 825 (NKYGRRSKFG…ATPIYLDILG (372 aa)) are cytoplasmic. At serine 493 the chain carries Phosphoserine. Residue tyrosine 516 is modified to Phosphotyrosine. The Protein kinase domain maps to 538–825 (IVLKRELGEG…ATPIYLDILG (288 aa)). ATP is bound by residues 544-552 (LGEGAFGKV) and lysine 572. The active-site Proton acceptor is the aspartate 679. Phosphotyrosine; by autocatalysis is present on residues tyrosine 705, tyrosine 709, and tyrosine 710.

This sequence belongs to the protein kinase superfamily. Tyr protein kinase family. Insulin receptor subfamily. Exists in a dynamic equilibrium between monomeric (low affinity) and dimeric (high affinity) structures. Binds SH2B2. Interacts with SQSTM1 and KIDINS220. Interacts with PTPRS. Interacts with MAPK8IP3/JIP3. In terms of processing, ligand-mediated auto-phosphorylation. In terms of tissue distribution, isoform 2 expression is restricted to specific areas in adult brain. Isoform 3 transcripts are readily detected early during embryogenesis and are expressed predominantly in adult brain and gonads.

The protein resides in the membrane. It carries out the reaction L-tyrosyl-[protein] + ATP = O-phospho-L-tyrosyl-[protein] + ADP + H(+). In terms of biological role, receptor tyrosine kinase involved in nervous system and probably heart development. Upon binding of its ligand NTF3/neurotrophin-3, NTRK3 autophosphorylates and activates different signaling pathways, including the phosphatidylinositol 3-kinase/AKT and the MAPK pathways, that control cell survival and differentiation. The chain is NT-3 growth factor receptor (Ntrk3) from Mus musculus (Mouse).